Reading from the N-terminus, the 116-residue chain is Large ribosomal subunit protein bL17 (116 aa).

Belongs to the bacterial ribosomal protein bL17 family. As to quaternary structure, part of the 50S ribosomal subunit. Contacts protein L32.

The chain is Large ribosomal subunit protein bL17 from Synechococcus sp. (strain JA-3-3Ab) (Cyanobacteria bacterium Yellowstone A-Prime).